A 312-amino-acid chain; its full sequence is 4-diphosphocytidyl-2-C-methyl-D-erythritol kinase (312 aa).

K10 is an active-site residue. 105-115 serves as a coordination point for ATP; that stretch reads PVAGGMAGGSA. The active site involves D146.

The protein belongs to the GHMP kinase family. IspE subfamily.

It catalyses the reaction 4-CDP-2-C-methyl-D-erythritol + ATP = 4-CDP-2-C-methyl-D-erythritol 2-phosphate + ADP + H(+). It functions in the pathway isoprenoid biosynthesis; isopentenyl diphosphate biosynthesis via DXP pathway; isopentenyl diphosphate from 1-deoxy-D-xylulose 5-phosphate: step 3/6. Catalyzes the phosphorylation of the position 2 hydroxy group of 4-diphosphocytidyl-2C-methyl-D-erythritol. The chain is 4-diphosphocytidyl-2-C-methyl-D-erythritol kinase from Corynebacterium glutamicum (strain R).